The chain runs to 230 residues: Sodium channel modifier 1 (230 aa).

Ser-2 carries the phosphoserine modification. The short motif at 4–20 is the Bipartite nuclear localization signal element; it reads KREGDDWSQLNVLKKRR. The segment at 42–74 adopts a Matrin-type zinc-finger fold; sequence FACAICPHRPVLDTLAMLTAHRAGKKHLSSLQL. Lys-67 is covalently cross-linked (Glycyl lysine isopeptide (Lys-Gly) (interchain with G-Cter in SUMO2)). 3 disordered regions span residues 76 to 106, 129 to 186, and 200 to 230; these read YGKKQPGKERKQNPKHQNELRREETKAEAPL, RRKY…SPTR, and GWIPDGRGRWVKDENVEFDSDEEEPPDLPLD. Residues 81–102 show a composition bias toward basic and acidic residues; that stretch reads PGKERKQNPKHQNELRREETKA. Position 144 is a phosphoserine (Ser-144). Low complexity predominate over residues 164–174; the sequence is PAAGPQAEESA. The residue at position 183 (Ser-183) is a Phosphoserine. The segment at 188-230 is required for interaction with LUC7L2; the sequence is RALDHYLTLRSSGWIPDGRGRWVKDENVEFDSDEEEPPDLPLD. Residues 205–214 are compositionally biased toward basic and acidic residues; the sequence is GRGRWVKDEN. Residues 215-230 show a composition bias toward acidic residues; it reads VEFDSDEEEPPDLPLD. Ser-219 carries the phosphoserine modification.

Component of the minor spliceosome, which splices U12-type introns. Within this complex, interacts with RNF113A, as well as with SF3B1/SF3b155, SF3B2/SF3b145, SF3B3/SF3b130 and CDC5L. May interact with LUC7L2 and SNRNP70.

The protein localises to the nucleus. Its subcellular location is the nucleoplasm. The protein resides in the nucleus speckle. In terms of biological role, as a component of the minor spliceosome, involved in the splicing of U12-type introns in pre-mRNAs. Plays a role in the regulation of primary cilia length and Hedgehog signaling. In Homo sapiens (Human), this protein is Sodium channel modifier 1 (SCNM1).